We begin with the raw amino-acid sequence, 129 residues long: MTDLAGPTITPNLQLVYVSNVERSTDFYRFIFKKEPVFVTPRYVAFPSSGDALFAIWSGGEEPVAEIPRFSEIGIMLPTGEDVDKLFNEWTKQKSHQIIVIKEPYTDVFGRTFLISDPDGHIIRVCPLD.

The region spanning 10–128 (TPNLQLVYVS…DGHIIRVCPL (119 aa)) is the VOC domain. D-alanylgriseoluteate is bound by residues 42–43 (RY) and Trp-57.

Homodimer.

In terms of biological role, required for resistance to the phenazine antibiotic D-alanylgriseoluteic acid (AGA), an antibiotic produced by E.agglomerans itself, and thus protects the bacterium against phenazine toxicity. Probably binds AGA and acts as a chaperone that works in tandem with a membrane transporter for subsequent antibiotic secretion. The polypeptide is Phenazine antibiotic resistance protein EhpR (Enterobacter agglomerans (Erwinia herbicola)).